We begin with the raw amino-acid sequence, 138 residues long: Acidic phospholipase A2 Ts-A1 (138 aa).

A signal peptide spans 1 to 16 (MRTLWIMAVLQVGVEG). Cystine bridges form between Cys-42–Cys-131, Cys-44–Cys-60, Cys-59–Cys-111, Cys-65–Cys-138, Cys-66–Cys-104, Cys-73–Cys-97, and Cys-91–Cys-102. Ca(2+) is bound by residues Phe-43, Gly-45, and Gly-47. His-63 is a catalytic residue. Ca(2+) is bound at residue Asp-64. Residue Asp-105 is part of the active site.

The cofactor is Ca(2+). As to expression, expressed by the venom gland.

It localises to the secreted. The enzyme catalyses a 1,2-diacyl-sn-glycero-3-phosphocholine + H2O = a 1-acyl-sn-glycero-3-phosphocholine + a fatty acid + H(+). Functionally, snake venom phospholipase A2 (PLA2) that shows a moderate inhibition of ADP-induced human platelet aggregation when tested on platelet rich plasma. Exhibits high hydrolytic activities and prefers the anionic micelles (dPPC with deoxycholate) to the zwitterionic micelles (dPPC with Triton X-100). PLA2 catalyzes the calcium-dependent hydrolysis of the 2-acyl groups in 3-sn-phosphoglycerides. This Trimeresurus stejnegeri (Chinese green tree viper) protein is Acidic phospholipase A2 Ts-A1.